The following is a 306-amino-acid chain: MSTLGHQYDNSLVSNAFGFLRLPMNFQPYDSDADWVITGVPFDMATSGRAGGRHGPAAIRQVSTNLAWEHHRFPWSFDMRERLNVVDCGDLVYAFGDAREMSEKLQAHAEKLLSAGKRMLSFGGDHFVTLPLLRAHAKHFGKMALVHFDAHTDTYANGCEFDHGTMFYTAPKEGLIDPHHSVQIGIRTEFDKDNGFTVLDACQVNDRGVDDILAQVKQIVGDMPVYLTFDIDCLDPAFAPGTGTPVIGGLTSDRAIKLVRGLKDLNIVGMDVVEVAPAYDQSEITALAAATLALEMLYIQAAKKGE.

The Mn(2+) site is built by H126, D149, H151, D153, D230, and D232.

It belongs to the arginase family. Agmatinase subfamily. It depends on Mn(2+) as a cofactor.

The catalysed reaction is agmatine + H2O = urea + putrescine. The protein operates within amine and polyamine biosynthesis; putrescine biosynthesis via agmatine pathway; putrescine from agmatine: step 1/1. Functionally, catalyzes the formation of putrescine from agmatine. This Salmonella dublin (strain CT_02021853) protein is Agmatinase.